Here is a 106-residue protein sequence, read N- to C-terminus: UPF0145 protein Dhaf_3855 (106 aa).

This sequence belongs to the UPF0145 family.

The chain is UPF0145 protein Dhaf_3855 from Desulfitobacterium hafniense (strain DSM 10664 / DCB-2).